Here is a 606-residue protein sequence, read N- to C-terminus: Protein couch potato (606 aa).

The short motif at 81–105 (IKRRPTLPQTPASAPQVLSPSPKRQ) is the Nuclear localization signal element. A run of 7 repeats spans residues 91–95 (PASAP), 109–113 (AVSVL), 114–118 (PVTVP), 122–126 (PVSVP), 128–132 (PVSVP), 134–138 (PVSVK), and 159–163 (PISHP). The tract at residues 91–164 (PASAPQVLSP…SHSHPISHPH (74 aa)) is 7 X 5 AA approximate repeats of P-V-S-V-P. Disordered regions lie at residues 147–166 (QIAH…PHHH), 282–311 (QQQQ…AGAA), 324–365 (VPTT…TSAA), and 388–410 (PATS…NSNS). The segment covering 344 to 365 (SNSATASAPTTPSPAGSVTSAA) has biased composition (low complexity). The 83-residue stretch at 442-524 (RTLFVSGLPM…QTIRLEFAKS (83 aa)) folds into the RRM domain.

As to expression, expressed in neural precursors and their daughter cells in the embryonic peripheral nervous system. Less abundant in a number of glial cells in the peripheral and central nervous systems and also present at low levels in the developing gut.

It localises to the nucleus. Functionally, may play a role in the development or function of the peripheral nervous system by regulating the processing of nervous system-specific transcripts. The sequence is that of Protein couch potato (cpo) from Drosophila melanogaster (Fruit fly).